Here is a 329-residue protein sequence, read N- to C-terminus: Peroxidase 73 (329 aa).

Positions 1 to 25 are cleaved as a signal peptide; sequence MARFSLVVVVTLSLAISMFPDTTTA. Disulfide bonds link cysteine 36–cysteine 119, cysteine 69–cysteine 74, cysteine 125–cysteine 325, and cysteine 204–cysteine 236. The Proton acceptor role is filled by histidine 67. Residues aspartate 68, valine 71, glycine 73, aspartate 75, and serine 77 each coordinate Ca(2+). Residue proline 167 coordinates substrate. Heme b is bound at residue histidine 197. Residue threonine 198 participates in Ca(2+) binding. N-linked (GlcNAc...) asparagine glycosylation is present at asparagine 215. Ca(2+) contacts are provided by aspartate 249, threonine 252, and aspartate 257.

Belongs to the peroxidase family. Classical plant (class III) peroxidase subfamily. Requires heme b as cofactor. The cofactor is Ca(2+). In terms of tissue distribution, expressed in the whole plant, with the highest expression in roots.

The protein resides in the secreted. The catalysed reaction is 2 a phenolic donor + H2O2 = 2 a phenolic radical donor + 2 H2O. In terms of biological role, removal of H(2)O(2), oxidation of toxic reductants, biosynthesis and degradation of lignin, suberization, auxin catabolism, response to environmental stresses such as wounding, pathogen attack and oxidative stress. These functions might be dependent on each isozyme/isoform in each plant tissue. In Arabidopsis thaliana (Mouse-ear cress), this protein is Peroxidase 73 (PER73).